Consider the following 330-residue polypeptide: 4-hydroxythreonine-4-phosphate dehydrogenase (330 aa).

Thr133 provides a ligand contact to substrate. 3 residues coordinate a divalent metal cation: His161, His206, and His261. Positions 269, 278, and 287 each coordinate substrate.

Belongs to the PdxA family. In terms of assembly, homodimer. Zn(2+) serves as cofactor. Mg(2+) is required as a cofactor. The cofactor is Co(2+).

Its subcellular location is the cytoplasm. It carries out the reaction 4-(phosphooxy)-L-threonine + NAD(+) = 3-amino-2-oxopropyl phosphate + CO2 + NADH. Its pathway is cofactor biosynthesis; pyridoxine 5'-phosphate biosynthesis; pyridoxine 5'-phosphate from D-erythrose 4-phosphate: step 4/5. Catalyzes the NAD(P)-dependent oxidation of 4-(phosphooxy)-L-threonine (HTP) into 2-amino-3-oxo-4-(phosphooxy)butyric acid which spontaneously decarboxylates to form 3-amino-2-oxopropyl phosphate (AHAP). This chain is 4-hydroxythreonine-4-phosphate dehydrogenase, found in Xylella fastidiosa (strain 9a5c).